Here is a 539-residue protein sequence, read N- to C-terminus: Trigger factor (539 aa).

The PPIase FKBP-type domain maps to G163–P252. Composition is skewed to low complexity over residues S434 to P447 and A475 to P484. Positions S434–E539 are disordered. The segment covering T509–V528 has biased composition (polar residues).

It belongs to the FKBP-type PPIase family. Tig subfamily.

It is found in the cytoplasm. It catalyses the reaction [protein]-peptidylproline (omega=180) = [protein]-peptidylproline (omega=0). Functionally, involved in protein export. Acts as a chaperone by maintaining the newly synthesized protein in an open conformation. Functions as a peptidyl-prolyl cis-trans isomerase. The chain is Trigger factor from Roseiflexus sp. (strain RS-1).